Here is a 264-residue protein sequence, read N- to C-terminus: Thymidylate synthase (264 aa).

Residue Arg21 participates in dUMP binding. His51 contributes to the (6R)-5,10-methylene-5,6,7,8-tetrahydrofolate binding site. DUMP is bound at residue 126-127; it reads RR. The active-site Nucleophile is Cys146. DUMP-binding positions include 166–169, Asn177, and 207–209; these read RSAD and HIY. Asp169 provides a ligand contact to (6R)-5,10-methylene-5,6,7,8-tetrahydrofolate. Ala263 provides a ligand contact to (6R)-5,10-methylene-5,6,7,8-tetrahydrofolate.

Belongs to the thymidylate synthase family. Bacterial-type ThyA subfamily. In terms of assembly, homodimer.

The protein localises to the cytoplasm. The catalysed reaction is dUMP + (6R)-5,10-methylene-5,6,7,8-tetrahydrofolate = 7,8-dihydrofolate + dTMP. It participates in pyrimidine metabolism; dTTP biosynthesis. Functionally, catalyzes the reductive methylation of 2'-deoxyuridine-5'-monophosphate (dUMP) to 2'-deoxythymidine-5'-monophosphate (dTMP) while utilizing 5,10-methylenetetrahydrofolate (mTHF) as the methyl donor and reductant in the reaction, yielding dihydrofolate (DHF) as a by-product. This enzymatic reaction provides an intracellular de novo source of dTMP, an essential precursor for DNA biosynthesis. This chain is Thymidylate synthase, found in Brucella anthropi (strain ATCC 49188 / DSM 6882 / CCUG 24695 / JCM 21032 / LMG 3331 / NBRC 15819 / NCTC 12168 / Alc 37) (Ochrobactrum anthropi).